We begin with the raw amino-acid sequence, 194 residues long: MFKGIVEGIGIIEKIDIYTDLDKYAIRFPENMLNGIKKESSIMFNGCFLTVTSVNSNIVWFDIFEKEARKLDTFREYKVGDRVNLGTFPKFGAASGGHILSARISCVASIIEIIENEDYQQMWIQIPENFTEFLIDKDYIAVDGISLTIDTIKNNQFFISLPLKIAQNTNMKWRKKGDKVNVELSNKINANQCW.

Lumazine-binding repeat units lie at residues Met1–His98 and Ile99–Trp194. Lys179–Glu183 lines the FMN pocket.

In terms of assembly, homodimer. Requires FMN as cofactor.

Functionally, antenna protein that modulates the color of the bioluminescence emission of the luciferase. In the presence of YFP and only at temperatures below 20 degrees Celsius, luciferase exhibits a bimodal emission spectrum with a new peak at 545 nM (yellow), in addition to the one at 485 nM. This chain is Yellow fluorescent protein (luxY), found in Aliivibrio fischeri (Vibrio fischeri).